Here is a 561-residue protein sequence, read N- to C-terminus: MSDNLRSRIVTQGSQRTPNRAMLRAVGFGDNDFIKPIVGVANGYSTITPCNMGLNDLALRAEAGLKSAGAMPQMFGTITISDGISMGTEGMKYSLVSREVIADSIETACNGQSMDGVIAIGGCDKNMPGAMIAIARMNIPAIFVYGGTIKPGHYQGEDLTVVSAFEAVGKYSAGKIDDNELLAIERNACPGAGSCGGMFTANTMSSAFEAMGMSLPYSSTMAAEDAEKADSTEQSAFVLVEAIRKQILPSQILTRKAFENAIAVIMAVGGSTNAVLHLLAIANTMGVELTIDDFETIRKKVPVLCDLKPSGRYVTVNLHQAGGIPQVMKMLLNHGLLHGDALTISGQTIAEVLQDIPDEPPANQDVIRPWNNPVYPEGHLAILKGNLAAEGAVAKISGVKKPKMTGPARVFESEEACLDAILAGKISAGDVVIVRYEGPKGGPGMREMLAPTSAIIGAGLGDSVGLITDGRFSGGTYGLVVGHVAPEAFVGGTIALVNEGDSVTIDAEKRLLQLNVSDEELATRRAHWTPPKPRYQRGILGKYAKLVSSSSLGAVTDVELF.

Cys50 lines the [2Fe-2S] cluster pocket. Residue Asp82 coordinates Mg(2+). Position 123 (Cys123) interacts with [2Fe-2S] cluster. Asp124 and Lys125 together coordinate Mg(2+). The residue at position 125 (Lys125) is an N6-carboxylysine. Position 195 (Cys195) interacts with [2Fe-2S] cluster. Glu447 provides a ligand contact to Mg(2+). Ser473 acts as the Proton acceptor in catalysis.

The protein belongs to the IlvD/Edd family. As to quaternary structure, homodimer. [2Fe-2S] cluster is required as a cofactor. Requires Mg(2+) as cofactor.

It carries out the reaction (2R)-2,3-dihydroxy-3-methylbutanoate = 3-methyl-2-oxobutanoate + H2O. The catalysed reaction is (2R,3R)-2,3-dihydroxy-3-methylpentanoate = (S)-3-methyl-2-oxopentanoate + H2O. It participates in amino-acid biosynthesis; L-isoleucine biosynthesis; L-isoleucine from 2-oxobutanoate: step 3/4. Its pathway is amino-acid biosynthesis; L-valine biosynthesis; L-valine from pyruvate: step 3/4. Functionally, functions in the biosynthesis of branched-chain amino acids. Catalyzes the dehydration of (2R,3R)-2,3-dihydroxy-3-methylpentanoate (2,3-dihydroxy-3-methylvalerate) into 2-oxo-3-methylpentanoate (2-oxo-3-methylvalerate) and of (2R)-2,3-dihydroxy-3-methylbutanoate (2,3-dihydroxyisovalerate) into 2-oxo-3-methylbutanoate (2-oxoisovalerate), the penultimate precursor to L-isoleucine and L-valine, respectively. The protein is Dihydroxy-acid dehydratase of Rippkaea orientalis (strain PCC 8801 / RF-1) (Cyanothece sp. (strain PCC 8801)).